A 316-amino-acid polypeptide reads, in one-letter code: 4-hydroxy-3-methylbut-2-enyl diphosphate reductase (316 aa).

Cysteine 12 contributes to the [4Fe-4S] cluster binding site. Residues histidine 41 and histidine 74 each coordinate (2E)-4-hydroxy-3-methylbut-2-enyl diphosphate. Dimethylallyl diphosphate is bound by residues histidine 41 and histidine 74. Positions 41 and 74 each coordinate isopentenyl diphosphate. Residue cysteine 96 coordinates [4Fe-4S] cluster. (2E)-4-hydroxy-3-methylbut-2-enyl diphosphate is bound at residue histidine 124. Residue histidine 124 participates in dimethylallyl diphosphate binding. Histidine 124 lines the isopentenyl diphosphate pocket. Glutamate 126 (proton donor) is an active-site residue. Threonine 169 contacts (2E)-4-hydroxy-3-methylbut-2-enyl diphosphate. Cysteine 199 provides a ligand contact to [4Fe-4S] cluster. 4 residues coordinate (2E)-4-hydroxy-3-methylbut-2-enyl diphosphate: serine 227, serine 228, asparagine 229, and serine 271. Residues serine 227, serine 228, asparagine 229, and serine 271 each coordinate dimethylallyl diphosphate. Isopentenyl diphosphate contacts are provided by serine 227, serine 228, asparagine 229, and serine 271.

The protein belongs to the IspH family. Requires [4Fe-4S] cluster as cofactor.

It catalyses the reaction isopentenyl diphosphate + 2 oxidized [2Fe-2S]-[ferredoxin] + H2O = (2E)-4-hydroxy-3-methylbut-2-enyl diphosphate + 2 reduced [2Fe-2S]-[ferredoxin] + 2 H(+). The catalysed reaction is dimethylallyl diphosphate + 2 oxidized [2Fe-2S]-[ferredoxin] + H2O = (2E)-4-hydroxy-3-methylbut-2-enyl diphosphate + 2 reduced [2Fe-2S]-[ferredoxin] + 2 H(+). Its pathway is isoprenoid biosynthesis; dimethylallyl diphosphate biosynthesis; dimethylallyl diphosphate from (2E)-4-hydroxy-3-methylbutenyl diphosphate: step 1/1. It participates in isoprenoid biosynthesis; isopentenyl diphosphate biosynthesis via DXP pathway; isopentenyl diphosphate from 1-deoxy-D-xylulose 5-phosphate: step 6/6. In terms of biological role, catalyzes the conversion of 1-hydroxy-2-methyl-2-(E)-butenyl 4-diphosphate (HMBPP) into a mixture of isopentenyl diphosphate (IPP) and dimethylallyl diphosphate (DMAPP). Acts in the terminal step of the DOXP/MEP pathway for isoprenoid precursor biosynthesis. The polypeptide is 4-hydroxy-3-methylbut-2-enyl diphosphate reductase (Xanthomonas campestris pv. campestris (strain ATCC 33913 / DSM 3586 / NCPPB 528 / LMG 568 / P 25)).